The sequence spans 237 residues: NAD-dependent protein deacetylase (237 aa).

The 237-residue stretch at Met-1–Glu-237 folds into the Deacetylase sirtuin-type domain. The NAD(+) site is built by Ala-25, Thr-29, Arg-37, Gln-100, Ile-102, Asp-103, and His-118. Residues Ile-102 and Asp-103 each coordinate nicotinamide. His-118 functions as the Proton acceptor in the catalytic mechanism. Cys-126, Cys-129, His-144, and Cys-147 together coordinate Zn(2+). NAD(+) is bound by residues Thr-185, Ser-186, and Asn-209.

This sequence belongs to the sirtuin family. Class U subfamily.

It localises to the cytoplasm. It catalyses the reaction N(6)-acetyl-L-lysyl-[protein] + NAD(+) + H2O = 2''-O-acetyl-ADP-D-ribose + nicotinamide + L-lysyl-[protein]. In terms of biological role, NAD-dependent protein deacetylase which modulates the activities of several enzymes which are inactive in their acetylated form. The chain is NAD-dependent protein deacetylase from Enterococcus faecalis (strain ATCC 700802 / V583).